Reading from the N-terminus, the 210-residue chain is ATP-dependent Clp protease proteolytic subunit (210 aa).

Residue Ser107 is the Nucleophile of the active site. The active site involves His132.

The protein belongs to the peptidase S14 family. Fourteen ClpP subunits assemble into 2 heptameric rings which stack back to back to give a disk-like structure with a central cavity, resembling the structure of eukaryotic proteasomes.

It localises to the cytoplasm. It catalyses the reaction Hydrolysis of proteins to small peptides in the presence of ATP and magnesium. alpha-casein is the usual test substrate. In the absence of ATP, only oligopeptides shorter than five residues are hydrolyzed (such as succinyl-Leu-Tyr-|-NHMec, and Leu-Tyr-Leu-|-Tyr-Trp, in which cleavage of the -Tyr-|-Leu- and -Tyr-|-Trp bonds also occurs).. Cleaves peptides in various proteins in a process that requires ATP hydrolysis. Has a chymotrypsin-like activity. Plays a major role in the degradation of misfolded proteins. This is ATP-dependent Clp protease proteolytic subunit from Cereibacter sphaeroides (strain ATCC 17025 / ATH 2.4.3) (Rhodobacter sphaeroides).